The sequence spans 230 residues: Inactive 2-(S)-hydroxypropyl-CoM dehydrogenase 2 (230 aa).

Belongs to the short-chain dehydrogenases/reductases (SDR) family.

This Xanthobacter autotrophicus (strain ATCC BAA-1158 / Py2) protein is Inactive 2-(S)-hydroxypropyl-CoM dehydrogenase 2.